The chain runs to 482 residues: Serine carboxypeptidase-like 36 (482 aa).

The signal sequence occupies residues 1–25; the sequence is MGKRQDWSVTACIFLFLSLASQIHC. Disulfide bonds link cysteine 119–cysteine 363, cysteine 275–cysteine 286, and cysteine 310–cysteine 331. The active site involves serine 210. The N-linked (GlcNAc...) asparagine glycan is linked to asparagine 228. N-linked (GlcNAc...) asparagine glycosylation is found at asparagine 312 and asparagine 352. Aspartate 402 is an active-site residue. Asparagine 418 and asparagine 444 each carry an N-linked (GlcNAc...) asparagine glycan. The active site involves histidine 455.

Belongs to the peptidase S10 family. As to expression, expressed in seedlings, flowers and siliques.

It is found in the secreted. In terms of biological role, probable carboxypeptidase. The chain is Serine carboxypeptidase-like 36 (SCPL36) from Arabidopsis thaliana (Mouse-ear cress).